Reading from the N-terminus, the 729-residue chain is Fatty acid oxidation complex subunit alpha (729 aa).

Residues 1–189 form an enoyl-CoA hydratase/isomerase region; the sequence is MLYKGDTLYL…KIGLVDGVVK (189 aa). Residue aspartate 296 participates in substrate binding. Residues 311–729 are 3-hydroxyacyl-CoA dehydrogenase; the sequence is ETPKQAAVLG…ARPVGDLKTA (419 aa). NAD(+)-binding positions include methionine 324, aspartate 343, 400–402, lysine 407, and serine 429; that span reads VVE. Histidine 450 functions as the For 3-hydroxyacyl-CoA dehydrogenase activity in the catalytic mechanism. Asparagine 453 provides a ligand contact to NAD(+). Positions 500 and 660 each coordinate substrate. The tract at residues 708-729 is disordered; that stretch reads RHNEPYYPPVEPARPVGDLKTA.

This sequence in the N-terminal section; belongs to the enoyl-CoA hydratase/isomerase family. In the C-terminal section; belongs to the 3-hydroxyacyl-CoA dehydrogenase family. Heterotetramer of two alpha chains (FadB) and two beta chains (FadA).

It carries out the reaction a (3S)-3-hydroxyacyl-CoA + NAD(+) = a 3-oxoacyl-CoA + NADH + H(+). The catalysed reaction is a (3S)-3-hydroxyacyl-CoA = a (2E)-enoyl-CoA + H2O. It catalyses the reaction a 4-saturated-(3S)-3-hydroxyacyl-CoA = a (3E)-enoyl-CoA + H2O. The enzyme catalyses (3S)-3-hydroxybutanoyl-CoA = (3R)-3-hydroxybutanoyl-CoA. It carries out the reaction a (3Z)-enoyl-CoA = a 4-saturated (2E)-enoyl-CoA. The catalysed reaction is a (3E)-enoyl-CoA = a 4-saturated (2E)-enoyl-CoA. Its pathway is lipid metabolism; fatty acid beta-oxidation. Involved in the aerobic and anaerobic degradation of long-chain fatty acids via beta-oxidation cycle. Catalyzes the formation of 3-oxoacyl-CoA from enoyl-CoA via L-3-hydroxyacyl-CoA. It can also use D-3-hydroxyacyl-CoA and cis-3-enoyl-CoA as substrate. The polypeptide is Fatty acid oxidation complex subunit alpha (Escherichia coli O139:H28 (strain E24377A / ETEC)).